A 698-amino-acid chain; its full sequence is Elongation factor G (698 aa).

The 276-residue stretch at 10–285 (DKTRNIGIMA…GVVDYLPSPL (276 aa)) folds into the tr-type G domain. GTP is bound by residues 19-26 (AHIDAGKT), 83-87 (DTPGH), and 137-140 (NKMD).

This sequence belongs to the TRAFAC class translation factor GTPase superfamily. Classic translation factor GTPase family. EF-G/EF-2 subfamily.

It localises to the cytoplasm. Its function is as follows. Catalyzes the GTP-dependent ribosomal translocation step during translation elongation. During this step, the ribosome changes from the pre-translocational (PRE) to the post-translocational (POST) state as the newly formed A-site-bound peptidyl-tRNA and P-site-bound deacylated tRNA move to the P and E sites, respectively. Catalyzes the coordinated movement of the two tRNA molecules, the mRNA and conformational changes in the ribosome. The sequence is that of Elongation factor G from Lactobacillus johnsonii (strain CNCM I-12250 / La1 / NCC 533).